A 515-amino-acid chain; its full sequence is MGEVKIFDTTLRDGEQSPGVSLIPEEKLAIAKQLARMKVDVIEAGFPISSPGDFEAVQIISENIRDVEVAALARSRKKDIDRAWEALRNGGDPRIHVFIATSPIHMKYKLKLSEEQVIEKAVEAVKYASKYTSNIEFSAEDASRSQPVFLYRLFERVINAGAKVINIPDTVGYAIPEEFGKLIRDIKENVSNIDKVDISVHCHNDLGLAVANSLAAVENGANQIEVAVNGIGERAGNTALEEIIMALYTRKDFYNIGINQDTTQIARLSKLVSNLTGMTIQPNKAIVGANAFAHESGIHQDGVIKERTTYEIMDARTIGLKDNKLVLGKHSGRHAFREFIQKLGYDIDDETFEEIFIEFKKLADKKKNITHVEIEALIDNHYHTFDKVYELDYLSVNTGNKVLPTATIKLKKENNIIEKAACSGDGPVDAIFQAINEIVGIDDIKLISYHINAVTEGKDALGEVIVKTKIEDNTYTGHSAMTDITEASALAYLETINKFLTSEQTRQTTSAQEGI.

A Pyruvate carboxyltransferase domain is found at 4-264 (VKIFDTTLRD…NIGINQDTTQ (261 aa)). The Mn(2+) site is built by Asp13, His201, His203, and Asn237. Residues 390–515 (ELDYLSVNTG…RQTTSAQEGI (126 aa)) are regulatory domain.

Belongs to the alpha-IPM synthase/homocitrate synthase family. LeuA type 1 subfamily. As to quaternary structure, homodimer. It depends on Mn(2+) as a cofactor.

Its subcellular location is the cytoplasm. It carries out the reaction 3-methyl-2-oxobutanoate + acetyl-CoA + H2O = (2S)-2-isopropylmalate + CoA + H(+). Its pathway is amino-acid biosynthesis; L-leucine biosynthesis; L-leucine from 3-methyl-2-oxobutanoate: step 1/4. In terms of biological role, catalyzes the condensation of the acetyl group of acetyl-CoA with 3-methyl-2-oxobutanoate (2-ketoisovalerate) to form 3-carboxy-3-hydroxy-4-methylpentanoate (2-isopropylmalate). The protein is 2-isopropylmalate synthase of Halothermothrix orenii (strain H 168 / OCM 544 / DSM 9562).